The chain runs to 163 residues: Protein-export protein SecB (163 aa).

It belongs to the SecB family. In terms of assembly, homotetramer, a dimer of dimers. One homotetramer interacts with 1 SecA dimer.

The protein resides in the cytoplasm. Its function is as follows. One of the proteins required for the normal export of preproteins out of the cell cytoplasm. It is a molecular chaperone that binds to a subset of precursor proteins, maintaining them in a translocation-competent state. It also specifically binds to its receptor SecA. The sequence is that of Protein-export protein SecB from Caulobacter vibrioides (strain ATCC 19089 / CIP 103742 / CB 15) (Caulobacter crescentus).